The sequence spans 360 residues: Peptide chain release factor 1 (360 aa).

Glutamine 235 carries the N5-methylglutamine modification. The interval 284-313 is disordered; the sequence is AKRQQAEASTRRNLLGSGDRSDRNRTYNFP.

It belongs to the prokaryotic/mitochondrial release factor family. Post-translationally, methylated by PrmC. Methylation increases the termination efficiency of RF1.

The protein localises to the cytoplasm. Functionally, peptide chain release factor 1 directs the termination of translation in response to the peptide chain termination codons UAG and UAA. The protein is Peptide chain release factor 1 of Salmonella gallinarum (strain 287/91 / NCTC 13346).